We begin with the raw amino-acid sequence, 344 residues long: Gas vesicle ATPase GvpN2 (344 aa).

The interval Met-1 to Phe-55 is disordered. The segment covering Asn-7–Ser-17 has biased composition (basic residues). Residues Ser-18–Gly-52 show a composition bias toward basic and acidic residues. ATP is bound at residue Gly-89–Thr-96.

This sequence belongs to the CbbQ/NirQ/NorQ/GpvN family. As to quaternary structure, forms homodimers, a GvpN-GvpO heterodimer, interacts with GvpC and GvpL, might interact with GvpA.

The protein resides in the gas vesicle. Its subcellular location is the cytoplasm. The enzyme catalyses ATP + H2O = ADP + phosphate + H(+). In terms of biological role, an ATPase that functions in gas vesicle formation. A minor component of the gas vesicle, also found in soluble extracts. Gas vesicles are hollow, gas filled proteinaceous nanostructures found in several microbial planktonic microorganisms. They allow positioning of halobacteria at the optimal depth for growth in the poorly aerated, shallow brine pools of their habitat. Functionally, expression of 2 c-vac DNA fragments containing 2 divergently transcribed regions (gvpE-gvpF-gvpG-gvpH-gvpI-gvpJ-gvpK-gvpL-gvpM and gvpA-gvpC-gvpN-gvpO) allows H.volcanii to produce gas vesicles. The sequence is that of Gas vesicle ATPase GvpN2 from Halobacterium salinarum (strain ATCC 700922 / JCM 11081 / NRC-1) (Halobacterium halobium).